A 170-amino-acid polypeptide reads, in one-letter code: MSETGPSLQRPATRAARLSAIEQALATHIITSQSQLSKILIDEGIAVTQATLSRDLDEMHAVKTRLKDGTVAYTVGRSVVASEGEDVGERGEAQMSRVLNGLVTSVAAAGNLVVVHTPSGAAQYVASVIDKQPIEGVLGTIAGDDTVMVICTNDDTAVFRSDWLLSLASK.

It belongs to the ArgR family.

It is found in the cytoplasm. It participates in amino-acid biosynthesis; L-arginine biosynthesis [regulation]. Regulates arginine biosynthesis genes. In Bifidobacterium longum (strain NCC 2705), this protein is Arginine repressor.